Here is a 489-residue protein sequence, read N- to C-terminus: Acetyl-coenzyme A carboxylase carboxyl transferase subunit beta, chloroplastic (489 aa).

Residues 222–489 (LWVQCENCYG…FFPLNSNSIK (268 aa)) form the CoA carboxyltransferase N-terminal domain. The Zn(2+) site is built by Cys-226, Cys-229, Cys-245, and Cys-248. The C4-type zinc-finger motif lies at 226–248 (CENCYGLNYKKFFRSKMNICEQC).

This sequence belongs to the AccD/PCCB family. In terms of assembly, acetyl-CoA carboxylase is a heterohexamer composed of biotin carboxyl carrier protein, biotin carboxylase and 2 subunits each of ACCase subunit alpha and ACCase plastid-coded subunit beta (accD). The cofactor is Zn(2+).

The protein resides in the plastid. It is found in the chloroplast stroma. The enzyme catalyses N(6)-carboxybiotinyl-L-lysyl-[protein] + acetyl-CoA = N(6)-biotinyl-L-lysyl-[protein] + malonyl-CoA. It functions in the pathway lipid metabolism; malonyl-CoA biosynthesis; malonyl-CoA from acetyl-CoA: step 1/1. In terms of biological role, component of the acetyl coenzyme A carboxylase (ACC) complex. Biotin carboxylase (BC) catalyzes the carboxylation of biotin on its carrier protein (BCCP) and then the CO(2) group is transferred by the transcarboxylase to acetyl-CoA to form malonyl-CoA. The chain is Acetyl-coenzyme A carboxylase carboxyl transferase subunit beta, chloroplastic from Buxus microphylla (Littleleaf boxwood).